Consider the following 369-residue polypeptide: Biotin synthase (369 aa).

The region spanning 51–269 (NYVQVSTLLS…IAVARIMMPK (219 aa)) is the Radical SAM core domain. [4Fe-4S] cluster-binding residues include C66, C70, and C73. [2Fe-2S] cluster contacts are provided by C110, C141, C201, and R273.

It belongs to the radical SAM superfamily. Biotin synthase family. In terms of assembly, homodimer. [4Fe-4S] cluster serves as cofactor. Requires [2Fe-2S] cluster as cofactor.

It carries out the reaction (4R,5S)-dethiobiotin + (sulfur carrier)-SH + 2 reduced [2Fe-2S]-[ferredoxin] + 2 S-adenosyl-L-methionine = (sulfur carrier)-H + biotin + 2 5'-deoxyadenosine + 2 L-methionine + 2 oxidized [2Fe-2S]-[ferredoxin]. It participates in cofactor biosynthesis; biotin biosynthesis; biotin from 7,8-diaminononanoate: step 2/2. In terms of biological role, catalyzes the conversion of dethiobiotin (DTB) to biotin by the insertion of a sulfur atom into dethiobiotin via a radical-based mechanism. This is Biotin synthase from Pseudoalteromonas atlantica (strain T6c / ATCC BAA-1087).